The chain runs to 222 residues: Thiopurine S-methyltransferase (222 aa).

The S-adenosyl-L-methionine site is built by Trp10, Leu45, Glu66, and Arg126.

This sequence belongs to the class I-like SAM-binding methyltransferase superfamily. TPMT family.

It is found in the cytoplasm. The enzyme catalyses S-adenosyl-L-methionine + a thiopurine = S-adenosyl-L-homocysteine + a thiopurine S-methylether.. The sequence is that of Thiopurine S-methyltransferase from Shewanella piezotolerans (strain WP3 / JCM 13877).